We begin with the raw amino-acid sequence, 76 residues long: MKFALFSVLVVLLIATFVAADECPRICTADYRPVCGTPSGGRRSANRTFGNQCSLNAHNCLNKGDTYDKLHDGECK.

A signal peptide spans 1–20 (MKFALFSVLVVLLIATFVAA). Residues 21 to 76 (DECPRICTADYRPVCGTPSGGRRSANRTFGNQCSLNAHNCLNKGDTYDKLHDGECK) enclose the Kazal-like domain. Disulfide bonds link Cys-23–Cys-60, Cys-27–Cys-53, and Cys-35–Cys-75.

Expressed by the salivary gland.

Its subcellular location is the secreted. Its function is as follows. Vasodilator protein that inhibits vasoconstriction of isolated rat femoral artery induced by phenylephrine. Since platelet aggregation and vasoconstriction are key hemostatic responses, particularly in small wounds, this protein likely participates in the antihemostatic responses during blood feeding. Blocks L-type calcium channels (Cav1/CACNA1) in left ventricular myocytes isolated from rat hearts. The polypeptide is Vasotab (Hybomitra bimaculata (Horse fly)).